A 479-amino-acid polypeptide reads, in one-letter code: MYGETTLNKNHVIKFIKLKINNCLGCDEVEINFSKADNVHIIIYSLVTDMAKDLPAVTPVAQAILLLCSLTYPDSDSLETIPQLKIGKGSVSMSFKVYPVNKEEETEPESESDLDEGPSTSKQALERMVQRAERKAKEASTRNVHSKGIYVNVERRFDMYFALDTVSYYINGGKRQSCPLPEFHAKFFVRPQHSINLLRQLHEKCSGNWLKVIQSDGDGDAFKKFKDPDSPFETFVKLFESNPIKPNDMMGKLAKTCLHVNEAVRLTEREFILEVFNQVRHIFEYITAQEYTVWFLVPCLGDKDQLRSKTLEDFDLTKVRTSIRRAGDTSNIWWDHTDHNIKDILLVAFQLDLATHVNQSVLVISHLETLAEFSTMQYVTAFFMNDFYAKKNTEPKWICHRYLERIIDVALFLGVIVIIEYPSAFTLLQEGRHLIKCFQKENADSSRTSQWEIFEDVVKENESDLEFLKEAVGKVQQNV.

The segment at 102–140 is disordered; it reads KEEETEPESESDLDEGPSTSKQALERMVQRAERKAKEAS. The segment covering 104–116 has biased composition (acidic residues); that stretch reads EETEPESESDLDE. Residues 124 to 140 are compositionally biased toward basic and acidic residues; it reads ALERMVQRAERKAKEAS.

As to quaternary structure, interacts with Sce.

It localises to the nucleus. Its subcellular location is the chromosome. The protein resides in the centromere. Essential for proper maintenance of sister-chromatid cohesion in both male and female meiosis. Mutations in ord cause premature separation of the sister chromatids in meiosis I and random segregation in both meiotic divisions. Required for chiasma maintenance in female meiosis. Mutations in ord reduce recombination in female meiosis. This chain is Protein ORD (ord), found in Drosophila melanogaster (Fruit fly).